Reading from the N-terminus, the 89-residue chain is Small ribosomal subunit protein uS19 (89 aa).

The protein belongs to the universal ribosomal protein uS19 family.

Functionally, protein S19 forms a complex with S13 that binds strongly to the 16S ribosomal RNA. This is Small ribosomal subunit protein uS19 from Ruthia magnifica subsp. Calyptogena magnifica.